The sequence spans 142 residues: Large ribosomal subunit protein uL13 (142 aa).

The protein belongs to the universal ribosomal protein uL13 family. Part of the 50S ribosomal subunit.

Its function is as follows. This protein is one of the early assembly proteins of the 50S ribosomal subunit, although it is not seen to bind rRNA by itself. It is important during the early stages of 50S assembly. This chain is Large ribosomal subunit protein uL13, found in Azoarcus sp. (strain BH72).